We begin with the raw amino-acid sequence, 158 residues long: 2-C-methyl-D-erythritol 2,4-cyclodiphosphate synthase (158 aa).

A divalent metal cation contacts are provided by aspartate 9 and histidine 11. Residues 9 to 11 (DVH) and 35 to 36 (HS) contribute to the 4-CDP-2-C-methyl-D-erythritol 2-phosphate site. Histidine 43 contacts a divalent metal cation. 4-CDP-2-C-methyl-D-erythritol 2-phosphate-binding positions include 57–59 (DIG), 62–66 (FPDTD), 101–107 (AQKPKMA), 133–136 (TTTE), phenylalanine 140, and arginine 143.

Belongs to the IspF family. In terms of assembly, homotrimer. Requires a divalent metal cation as cofactor.

It carries out the reaction 4-CDP-2-C-methyl-D-erythritol 2-phosphate = 2-C-methyl-D-erythritol 2,4-cyclic diphosphate + CMP. It functions in the pathway isoprenoid biosynthesis; isopentenyl diphosphate biosynthesis via DXP pathway; isopentenyl diphosphate from 1-deoxy-D-xylulose 5-phosphate: step 4/6. Its function is as follows. Involved in the biosynthesis of isopentenyl diphosphate (IPP) and dimethylallyl diphosphate (DMAPP), two major building blocks of isoprenoid compounds. Catalyzes the conversion of 4-diphosphocytidyl-2-C-methyl-D-erythritol 2-phosphate (CDP-ME2P) to 2-C-methyl-D-erythritol 2,4-cyclodiphosphate (ME-CPP) with a corresponding release of cytidine 5-monophosphate (CMP). The polypeptide is 2-C-methyl-D-erythritol 2,4-cyclodiphosphate synthase (Bacillus cytotoxicus (strain DSM 22905 / CIP 110041 / 391-98 / NVH 391-98)).